A 119-amino-acid chain; its full sequence is Aspartate 1-decarboxylase (119 aa).

Ser-25 acts as the Schiff-base intermediate with substrate; via pyruvic acid in catalysis. Ser-25 carries the post-translational modification Pyruvic acid (Ser). Substrate is bound at residue Thr-57. The active-site Proton donor is the Tyr-58. 73 to 75 provides a ligand contact to substrate; the sequence is GAA.

The protein belongs to the PanD family. As to quaternary structure, heterooctamer of four alpha and four beta subunits. Requires pyruvate as cofactor. Is synthesized initially as an inactive proenzyme, which is activated by self-cleavage at a specific serine bond to produce a beta-subunit with a hydroxyl group at its C-terminus and an alpha-subunit with a pyruvoyl group at its N-terminus.

It is found in the cytoplasm. The catalysed reaction is L-aspartate + H(+) = beta-alanine + CO2. The protein operates within cofactor biosynthesis; (R)-pantothenate biosynthesis; beta-alanine from L-aspartate: step 1/1. Functionally, catalyzes the pyruvoyl-dependent decarboxylation of aspartate to produce beta-alanine. This chain is Aspartate 1-decarboxylase, found in Ruthia magnifica subsp. Calyptogena magnifica.